Consider the following 298-residue polypeptide: MSEFKVKTGLAQMLKGGVIMDVVTPEQAIIAERAGACAVMALERIPADMRKSGQVCRMSDPRMIKEIMEAVSIPVMAKVRIGHFVEAQILEELQVDYIDESEVLTPADWTHHIEKHNFKVPFVCGAKDLGEALRRINEGAAMIRTKGEAGTGDVSEAVKHITKIKAEIQQYKENLKTESDFAAKATELRVPVDLLKTTLSEGKLPVVNFAAGGVATPADAALLMQLGCEGVFVGSGIFKSSDPEKLACAIVEATTHYDNPAKLLQVSSDLGDLMGGISIQSINEAGGKNGARLSEIGW.

Position 21 (D21) interacts with D-ribose 5-phosphate. The active-site Schiff-base intermediate with D-ribose 5-phosphate is K78. Residues G150, G213, and 234 to 235 (GS) contribute to the D-ribose 5-phosphate site.

It belongs to the PdxS/SNZ family. Homohexamer. Interacts with THI11.

It carries out the reaction aldehydo-D-ribose 5-phosphate + D-glyceraldehyde 3-phosphate + L-glutamine = pyridoxal 5'-phosphate + L-glutamate + phosphate + 3 H2O + H(+). It functions in the pathway cofactor biosynthesis; pyridoxal 5'-phosphate biosynthesis. Functionally, catalyzes the formation of pyridoxal 5'-phosphate from ribose 5-phosphate (RBP), glyceraldehyde 3-phosphate (G3P) and ammonia. The ammonia is provided by a SNO isoform. Can also use ribulose 5-phosphate and dihydroxyacetone phosphate as substrates, resulting from enzyme-catalyzed isomerization of RBP and G3P, respectively. The sequence is that of Probable pyridoxal 5'-phosphate synthase subunit SNZ3 (SNZ3) from Saccharomyces cerevisiae (strain ATCC 204508 / S288c) (Baker's yeast).